The primary structure comprises 429 residues: Homocysteine synthase (429 aa).

Lys-210 is subject to N6-(pyridoxal phosphate)lysine.

Belongs to the trans-sulfuration enzymes family. In terms of assembly, homotetramer. Pyridoxal 5'-phosphate is required as a cofactor.

It localises to the cytoplasm. Its subcellular location is the nucleus. It carries out the reaction O-acetyl-L-homoserine + methanethiol = L-methionine + acetate + H(+). It catalyses the reaction O-acetyl-L-homoserine + hydrogen sulfide = L-homocysteine + acetate. It participates in amino-acid biosynthesis; L-methionine biosynthesis via de novo pathway; L-homocysteine from O-acetyl-L-homoserine. In terms of biological role, catalyzes the conversion of O-acetyl-L-homoserine (OAH) into homocysteine in the methionine biosynthesis pathway. Can also use O-succinyl-L-homoserine and L-homoserine as substrates. Also has cysteine synthase (O-acetylserine sulfhydrylase) activity in vitro, but in S.pombe, it seems only to be involved in the alternative pathway of methionine biosynthesis under cysteine deficiency conditions. This chain is Homocysteine synthase, found in Schizosaccharomyces pombe (strain 972 / ATCC 24843) (Fission yeast).